A 155-amino-acid polypeptide reads, in one-letter code: Ribosome maturation factor RimP (155 aa).

The protein belongs to the RimP family.

The protein localises to the cytoplasm. Its function is as follows. Required for maturation of 30S ribosomal subunits. This chain is Ribosome maturation factor RimP, found in Lachnoclostridium phytofermentans (strain ATCC 700394 / DSM 18823 / ISDg) (Clostridium phytofermentans).